Consider the following 458-residue polypeptide: tRNA-2-methylthio-N(6)-dimethylallyladenosine synthase (458 aa).

One can recognise an MTTase N-terminal domain in the interval 3-120 (QKLYIETFGC…LPSMLEQVRC (118 aa)). Positions 12, 49, 83, 157, 161, and 164 each coordinate [4Fe-4S] cluster. The region spanning 143–375 (RADGPKAFVS…QAKIADNAAK (233 aa)) is the Radical SAM core domain. A TRAM domain is found at 378–441 (ASMVGSIQSV…PNSLRGRLIG (64 aa)).

It belongs to the methylthiotransferase family. MiaB subfamily. In terms of assembly, monomer. It depends on [4Fe-4S] cluster as a cofactor.

The protein localises to the cytoplasm. It carries out the reaction N(6)-dimethylallyladenosine(37) in tRNA + (sulfur carrier)-SH + AH2 + 2 S-adenosyl-L-methionine = 2-methylsulfanyl-N(6)-dimethylallyladenosine(37) in tRNA + (sulfur carrier)-H + 5'-deoxyadenosine + L-methionine + A + S-adenosyl-L-homocysteine + 2 H(+). Functionally, catalyzes the methylthiolation of N6-(dimethylallyl)adenosine (i(6)A), leading to the formation of 2-methylthio-N6-(dimethylallyl)adenosine (ms(2)i(6)A) at position 37 in tRNAs that read codons beginning with uridine. This Methylococcus capsulatus (strain ATCC 33009 / NCIMB 11132 / Bath) protein is tRNA-2-methylthio-N(6)-dimethylallyladenosine synthase.